A 517-amino-acid chain; its full sequence is 2-isopropylmalate synthase (517 aa).

A Pyruvate carboxyltransferase domain is found at 7–269 (VIIFDTTLRD…ETGIDTTQIV (263 aa)). The Mn(2+) site is built by Asp-16, His-204, His-206, and Asn-240. Positions 395 to 517 (KFISQKISTE…KPKAQGSGTI (123 aa)) are regulatory domain.

Belongs to the alpha-IPM synthase/homocitrate synthase family. LeuA type 1 subfamily. As to quaternary structure, homodimer. Requires Mn(2+) as cofactor.

It is found in the cytoplasm. It catalyses the reaction 3-methyl-2-oxobutanoate + acetyl-CoA + H2O = (2S)-2-isopropylmalate + CoA + H(+). It functions in the pathway amino-acid biosynthesis; L-leucine biosynthesis; L-leucine from 3-methyl-2-oxobutanoate: step 1/4. In terms of biological role, catalyzes the condensation of the acetyl group of acetyl-CoA with 3-methyl-2-oxobutanoate (2-ketoisovalerate) to form 3-carboxy-3-hydroxy-4-methylpentanoate (2-isopropylmalate). The chain is 2-isopropylmalate synthase from Neisseria meningitidis serogroup A / serotype 4A (strain DSM 15465 / Z2491).